The sequence spans 403 residues: Endophilin-B2 (403 aa).

A membrane-binding amphipathic helix region spans residues Met-1–Leu-27. Positions Glu-24–Gly-287 constitute a BAR domain. Residues Trp-210 to Glu-233 are a coiled coil. The SH3 domain maps to Ser-343 to Ser-403.

It belongs to the endophilin family. In terms of assembly, homodimer, and heterodimer with SH3GLB1.

It is found in the cytoplasm. The polypeptide is Endophilin-B2 (Gallus gallus (Chicken)).